Reading from the N-terminus, the 137-residue chain is Putative pre-16S rRNA nuclease (137 aa).

The protein belongs to the YqgF nuclease family.

The protein resides in the cytoplasm. Functionally, could be a nuclease involved in processing of the 5'-end of pre-16S rRNA. The polypeptide is Putative pre-16S rRNA nuclease (Bacillus cereus (strain B4264)).